The following is a 106-amino-acid chain: MVNIPKTRRTYCKGKACRKHTPHKVTQYKKGKDSLSAQGKRRYDRKQSGYGGQTKPVFHKKAKTTKKVVLRLECTVCKTKHQLALKRCKHFELGGDKKQRGAAISF.

A compositionally biased stretch (basic residues) spans 1–29 (MVNIPKTRRTYCKGKACRKHTPHKVTQYK). The segment at 1–56 (MVNIPKTRRTYCKGKACRKHTPHKVTQYKKGKDSLSAQGKRRYDRKQSGYGGQTKP) is disordered.

The protein belongs to the eukaryotic ribosomal protein eL42 family.

This is Large ribosomal subunit protein eL42 (RPL44) from Cryptococcus neoformans var. neoformans serotype D (strain B-3501A) (Filobasidiella neoformans).